A 100-amino-acid polypeptide reads, in one-letter code: Urease subunit gamma (100 aa).

Belongs to the urease gamma subunit family. In terms of assembly, heterotrimer of UreA (gamma), UreB (beta) and UreC (alpha) subunits. Three heterotrimers associate to form the active enzyme.

The protein localises to the cytoplasm. It carries out the reaction urea + 2 H2O + H(+) = hydrogencarbonate + 2 NH4(+). It participates in nitrogen metabolism; urea degradation; CO(2) and NH(3) from urea (urease route): step 1/1. The polypeptide is Urease subunit gamma (Paraburkholderia phytofirmans (strain DSM 17436 / LMG 22146 / PsJN) (Burkholderia phytofirmans)).